Here is an 856-residue protein sequence, read N- to C-terminus: MAYTPMIKQYKEIKEQNKDCILFFRLGDFYEMFFDDALIASKELEIVLTQRDCGENKKCPMCGIPYHVSDVYINKLVSKGYKVAICEQLEDPKLVKGLVKRGIIKIYTPATVIENENSDTGNFNYLMSISKKSNEVAISYIDISTGDVSYTNTTSDDIYKIIENEISKITPKEIIFNDHEFSTNSLETIASKFSIVLTTVNNGTDSIDFINSKITYDNTNSETTNICVANLLKYVFRYQDDLVHINSSRKYYINEFMEIDSNSVINLEIQKNLYTNSKNGSLFGVLNHTKTSMGSRLLHSYLERPLMDKEEILIRQNRVEEIFEDYELLVNLENCLDGIYDLDRLIAKLSYKSANAKDLIALKVSIEKIPYLKNLLNCNKKNVQLIGEKLDDLRDIYDLIDKSIVDDPPVILTEGNLIKPNFSNELDQLRYNRVNGKNELVEYEMSEKDRLGIKNLKIVFNKKLGYFIDVTKSNLNKVGEDYEKRQTLTNSSRFKTKQLEAIESKILDSEDEIFELEYKIFEDIRKIILENLSRIKKSADLIAIIDVSNSLAKCAYLNNYIKPDINTYGLIDVLESRHPIVELSVGQSEFITNDILIGSGKNDIQLITGPNMSGKSTYLRQVALICILNQIGSFVPATKANISIVDKIFTRIGSSDNLFKGESTFMVEMKEMSNIIKYATSNSLLVLDEIGRGTSTYDGLSLAWAIVEYISKDIKAKTLFATHYHELTELEKKLDNLINMKVDIKETNDSIIFLRKITRGSTDKSYGIEVAELAGMPKTLIKRAKSILKEIDKEDTKIDLPIADFAVQNEMEDDKNIHELKDFKDEIKNINVNEITPIQSLQLLNELVIKASKLGD.

609–616 is an ATP binding site; it reads GPNMSGKS.

The protein belongs to the DNA mismatch repair MutS family.

Functionally, this protein is involved in the repair of mismatches in DNA. It is possible that it carries out the mismatch recognition step. This protein has a weak ATPase activity. The protein is DNA mismatch repair protein MutS of Finegoldia magna (strain ATCC 29328 / DSM 20472 / WAL 2508) (Peptostreptococcus magnus).